The chain runs to 95 residues: Feather keratin B-4 (95 aa).

The residue at position 1 (Ser-1) is an N-acetylserine.

This sequence belongs to the avian keratin family. In terms of assembly, the avian keratins (F-ker, S-ker, C-ker and B-ker) are a complex mixture of very similar polypeptides.

The sequence is that of Feather keratin B-4 from Columba livia (Rock dove).